Reading from the N-terminus, the 239-residue chain is Ribosomal RNA small subunit methyltransferase G (239 aa).

Residues Gly-77, Phe-82, 128–129 (AE), and Arg-147 each bind S-adenosyl-L-methionine.

The protein belongs to the methyltransferase superfamily. RNA methyltransferase RsmG family.

It is found in the cytoplasm. In terms of biological role, specifically methylates the N7 position of guanine in position 535 of 16S rRNA. In Bacillus anthracis (strain A0248), this protein is Ribosomal RNA small subunit methyltransferase G.